The following is a 188-amino-acid chain: Elongation factor P (188 aa).

Position 34 is an N6-(3,6-diaminohexanoyl)-5-hydroxylysine (Lys-34).

It belongs to the elongation factor P family. In terms of processing, may be beta-lysylated on the epsilon-amino group of Lys-34 by the combined action of EpmA and EpmB, and then hydroxylated on the C5 position of the same residue by EpmC (if this protein is present). Lysylation is critical for the stimulatory effect of EF-P on peptide-bond formation. The lysylation moiety may extend toward the peptidyltransferase center and stabilize the terminal 3-CCA end of the tRNA. Hydroxylation of the C5 position on Lys-34 may allow additional potential stabilizing hydrogen-bond interactions with the P-tRNA.

The protein resides in the cytoplasm. The protein operates within protein biosynthesis; polypeptide chain elongation. Involved in peptide bond synthesis. Alleviates ribosome stalling that occurs when 3 or more consecutive Pro residues or the sequence PPG is present in a protein, possibly by augmenting the peptidyl transferase activity of the ribosome. Modification of Lys-34 is required for alleviation. The chain is Elongation factor P from Haemophilus influenzae (strain PittGG).